Here is a 360-residue protein sequence, read N- to C-terminus: Mannose-1-phosphate guanylyltransferase catalytic subunit beta (360 aa).

The interval 2–222 (KALILVGGYG…QGFWMDIGQP (221 aa)) is substrate-binding domain. Asp-110 serves as a coordination point for GDP-alpha-D-mannose. Mg(2+) is bound at residue Asp-110. Lys-162 is an active-site residue. Residue Asp-218 coordinates GDP-alpha-D-mannose. Asp-218 serves as a coordination point for Mg(2+). The hexapeptide repeat domain stretch occupies residues 245–360 (CSGPGIVGNV…ESVPEPRIIM (116 aa)).

It belongs to the transferase hexapeptide repeat family. As to quaternary structure, component of the GMPPA-GMPPB mannose-1-phosphate guanylyltransferase complex composed of 4 GMPPA subunits and 8 GMPPB subunits; the complex is organized into three layers, a central layer made up of 2 GMPPA dimers sandwiched between two layers each made up of 2 GMPPB dimers. GMPPB catalytic activity is reduced when part of the complex and binding of GDP-alpha-D-Mannose by GMPPA induces allosteric feedback inhibition of GMPPB. It depends on Mg(2+) as a cofactor. In terms of tissue distribution, ubiquitously expressed, including in brain and skeletal muscle. As to expression, weakly expressed with highest expression in skeletal muscle, brain and gonads.

The protein resides in the cytoplasm. It catalyses the reaction alpha-D-mannose 1-phosphate + GTP + H(+) = GDP-alpha-D-mannose + diphosphate. Its pathway is nucleotide-sugar biosynthesis; GDP-alpha-D-mannose biosynthesis; GDP-alpha-D-mannose from alpha-D-mannose 1-phosphate (GTP route): step 1/1. Its activity is regulated as follows. Enzyme activity is reduced by incorporation into the GMPPA-GMPPB mannose-1-phosphate guanylyltransferase complex. Allosterically inhibited, when part of the GMPPA-GMPPB complex, by GDP-alpha-D-mannose binding to GMPPA. Catalytic subunit of the GMPPA-GMPPB mannose-1-phosphate guanylyltransferase complex. Catalyzes the formation of GDP-mannose, an essential precursor of glycan moieties of glycoproteins and glycolipids. Can catalyze the reverse reaction in vitro. Together with GMPPA regulates GDP-alpha-D-mannose levels. The sequence is that of Mannose-1-phosphate guanylyltransferase catalytic subunit beta from Homo sapiens (Human).